Reading from the N-terminus, the 846-residue chain is Aminopeptidase N (846 aa).

Substrate contacts are provided by residues Glu-120 and Gly-252 to Asn-256. His-288 contributes to the Zn(2+) binding site. Glu-289 acts as the Proton acceptor in catalysis. 2 residues coordinate Zn(2+): His-292 and Glu-311.

Belongs to the peptidase M1 family. As to quaternary structure, monomer. It depends on Zn(2+) as a cofactor.

It is found in the cytoplasm. The enzyme catalyses Release of an N-terminal amino acid, Xaa-|-Yaa- from a peptide, amide or arylamide. Xaa is preferably Ala, but may be most amino acids including Pro (slow action). When a terminal hydrophobic residue is followed by a prolyl residue, the two may be released as an intact Xaa-Pro dipeptide.. Its function is as follows. Aminopeptidase with broad substrate specificity to several peptides. It has more affinity for oligopeptides than for dipeptides. It plays an essential role in the metabolism, it may be involved in nitrogen supply or protein turnover. The chain is Aminopeptidase N (pepN) from Lactococcus lactis subsp. cremoris (strain MG1363).